Consider the following 360-residue polypeptide: Dihydroorotate dehydrogenase (quinone) (360 aa).

Residues 60 to 64 (AGFDK) and Thr-84 contribute to the FMN site. Lys-64 lines the substrate pocket. 109-113 (NRMGF) lines the substrate pocket. Positions 137 and 168 each coordinate FMN. Substrate is bound at residue Asn-168. Catalysis depends on Ser-171, which acts as the Nucleophile. Substrate is bound at residue Asn-173. FMN contacts are provided by Lys-213 and Ser-241. 242 to 243 (NT) is a substrate binding site. FMN is bound by residues Gly-264, Gly-293, and 314–315 (YS).

The protein belongs to the dihydroorotate dehydrogenase family. Type 2 subfamily. As to quaternary structure, monomer. It depends on FMN as a cofactor.

The protein resides in the cell membrane. It carries out the reaction (S)-dihydroorotate + a quinone = orotate + a quinol. Its pathway is pyrimidine metabolism; UMP biosynthesis via de novo pathway; orotate from (S)-dihydroorotate (quinone route): step 1/1. Catalyzes the conversion of dihydroorotate to orotate with quinone as electron acceptor. This Bartonella tribocorum (strain CIP 105476 / IBS 506) protein is Dihydroorotate dehydrogenase (quinone).